The following is a 141-amino-acid chain: Endoribonuclease YbeY (141 aa).

Positions 100, 104, and 110 each coordinate Zn(2+).

This sequence belongs to the endoribonuclease YbeY family. It depends on Zn(2+) as a cofactor.

It is found in the cytoplasm. Its function is as follows. Single strand-specific metallo-endoribonuclease involved in late-stage 70S ribosome quality control and in maturation of the 3' terminus of the 16S rRNA. The sequence is that of Endoribonuclease YbeY from Helicobacter pylori (strain J99 / ATCC 700824) (Campylobacter pylori J99).